A 270-amino-acid chain; its full sequence is NADPH-dependent 7-cyano-7-deazaguanine reductase (270 aa).

79–81 (IES) provides a ligand contact to substrate. 81-82 (SK) serves as a coordination point for NADPH. Cys-177 acts as the Thioimide intermediate in catalysis. Asp-184 functions as the Proton donor in the catalytic mechanism. 216–217 (HE) serves as a coordination point for substrate. An NADPH-binding site is contributed by 245-246 (RG).

It belongs to the GTP cyclohydrolase I family. QueF type 2 subfamily. Homodimer.

It localises to the cytoplasm. It catalyses the reaction 7-aminomethyl-7-carbaguanine + 2 NADP(+) = 7-cyano-7-deazaguanine + 2 NADPH + 3 H(+). Its pathway is tRNA modification; tRNA-queuosine biosynthesis. Functionally, catalyzes the NADPH-dependent reduction of 7-cyano-7-deazaguanine (preQ0) to 7-aminomethyl-7-deazaguanine (preQ1). In Acinetobacter baumannii (strain ATCC 17978 / DSM 105126 / CIP 53.77 / LMG 1025 / NCDC KC755 / 5377), this protein is NADPH-dependent 7-cyano-7-deazaguanine reductase.